The sequence spans 47 residues: Defensin-like protein 2 (47 aa).

4 cysteine pairs are disulfide-bonded: C5–C47, C16–C36, C22–C43, and C26–C45.

It belongs to the DEFL family.

Its function is as follows. Fabatins have antibacterial activity against Gram-positive and Gram-negative bacteria. High activity against P.aeruginosa. No activity against S.cerevisiae and C.albicans. This is Defensin-like protein 2 from Vicia faba (Broad bean).